The chain runs to 310 residues: Carbamate kinase (310 aa).

Belongs to the carbamate kinase family.

The protein resides in the cytoplasm. It carries out the reaction hydrogencarbonate + NH4(+) + ATP = carbamoyl phosphate + ADP + H2O + H(+). It functions in the pathway metabolic intermediate metabolism; carbamoyl phosphate degradation; CO(2) and NH(3) from carbamoyl phosphate: step 1/1. The chain is Carbamate kinase (arcC) from Staphylococcus epidermidis (strain ATCC 35984 / DSM 28319 / BCRC 17069 / CCUG 31568 / BM 3577 / RP62A).